The sequence spans 211 residues: Guanylate kinase (211 aa).

Residues 7–185 form the Guanylate kinase-like domain; that stretch reads GLLIVVTGPS…AVAELRAIIM (179 aa). 14–21 lines the ATP pocket; sequence GPSAVGKG.

It belongs to the guanylate kinase family.

The protein resides in the cytoplasm. The enzyme catalyses GMP + ATP = GDP + ADP. Essential for recycling GMP and indirectly, cGMP. This is Guanylate kinase from Symbiobacterium thermophilum (strain DSM 24528 / JCM 14929 / IAM 14863 / T).